The primary structure comprises 183 residues: Translation initiation factor IF-3 (183 aa).

This sequence belongs to the IF-3 family. As to quaternary structure, monomer.

Its subcellular location is the cytoplasm. IF-3 binds to the 30S ribosomal subunit and shifts the equilibrium between 70S ribosomes and their 50S and 30S subunits in favor of the free subunits, thus enhancing the availability of 30S subunits on which protein synthesis initiation begins. The protein is Translation initiation factor IF-3 of Yersinia enterocolitica serotype O:8 / biotype 1B (strain NCTC 13174 / 8081).